The following is a 598-amino-acid chain: MEDGGAGLRAPRYPAEDTSPTTDRELRGFFCYGLAAEVFAVCAVGSFLPVTLEQLAREQGVLFIDKVTPCTAKNATVIANATVNALMSRAEGSDTHQCIINVFGAELTTASFAMYTFSASVFMQALALVSVSSVADHGTWRKKLLAGFGLTGSVSAMLFLLVVPQIFVVGSFLTVICVVCLGCSFVILNSYLPLLVLNHPVVQSDEDHPTASSSIPLQPISPQRSSRKSEESLHQVNRKEVDIGSKADSSDLQLSTKISSKGVGIGYMAAVSVQVICILILYIMNKTGVSSTLPLRTVLFFVGSWWLTFTIPSVMWLRDRPGPPLPTALYEGRAFVRTCMSYTIFAWKSLWKTVKVAVKLRQVLLFLIAWFLLSDAVATISATAILFARTELQMGTVAVALLSIIATSSGIIGATVWPIISKRFTLKTNHIIVCCLLLLELVPLYGLLGFLPFVQAWGVGGLQKWYEIYPLGIIHGMVMGGLSSYCRSFYGLLIPPGSEAAFYALFAITDKGSSAVGPAIVGKIVDATGQIRPAFGFLAVLIALPIPLIWMVDVEKGQEDAIRMAGLMKTTDDGHEDFESFEGSSDGHEAEGLMRDHD.

Positions 1-20 (MEDGGAGLRAPRYPAEDTSP) are disordered. The helical transmembrane segment at 28-48 (GFFCYGLAAEVFAVCAVGSFL) threads the bilayer. Residues Asn-74 and Asn-80 are each glycosylated (N-linked (GlcNAc...) asparagine). 3 helical membrane passes run 111–131 (SFAM…LVSV), 159–179 (FLLV…ICVV), and 182–202 (GCSF…HPVV). The disordered stretch occupies residues 207–238 (DHPTASSSIPLQPISPQRSSRKSEESLHQVNR). Positions 212–224 (SSSIPLQPISPQR) are enriched in low complexity. Residues 227-238 (RKSEESLHQVNR) show a composition bias toward basic and acidic residues. Residues 263–283 (VGIGYMAAVSVQVICILILYI) traverse the membrane as a helical segment. Asn-285 is a glycosylation site (N-linked (GlcNAc...) asparagine). Helical transmembrane passes span 297–317 (TVLF…VMWL), 363–383 (VLLF…ISAT), 400–420 (ALLS…WPII), 431–451 (IIVC…LGFL), 465–485 (WYEI…LSSY), 489–509 (FYGL…FAIT), and 534–554 (AFGF…MVDV). The tract at residues 575 to 598 (HEDFESFEGSSDGHEAEGLMRDHD) is disordered. Residues 585-598 (SDGHEAEGLMRDHD) are compositionally biased toward basic and acidic residues.

It belongs to the ATG22 family.

Its subcellular location is the vacuole membrane. In terms of biological role, vacuolar effluxer which mediate the efflux of amino acids resulting from autophagic degradation. The release of autophagic amino acids allows the maintenance of protein synthesis and viability during nitrogen starvation. The polypeptide is Autophagy-related protein 22-1 (atg22-1) (Sclerotinia sclerotiorum (strain ATCC 18683 / 1980 / Ss-1) (White mold)).